A 125-amino-acid chain; its full sequence is Aspartate 1-decarboxylase (125 aa).

The active-site Schiff-base intermediate with substrate; via pyruvic acid is S25. The residue at position 25 (S25) is a Pyruvic acid (Ser). T57 contributes to the substrate binding site. Y58 acts as the Proton donor in catalysis. 71 to 73 (GAA) contributes to the substrate binding site.

It belongs to the PanD family. In terms of assembly, heterooctamer of four alpha and four beta subunits. Pyruvate serves as cofactor. Is synthesized initially as an inactive proenzyme, which is activated by self-cleavage at a specific serine bond to produce a beta-subunit with a hydroxyl group at its C-terminus and an alpha-subunit with a pyruvoyl group at its N-terminus.

It is found in the cytoplasm. It carries out the reaction L-aspartate + H(+) = beta-alanine + CO2. Its pathway is cofactor biosynthesis; (R)-pantothenate biosynthesis; beta-alanine from L-aspartate: step 1/1. Its function is as follows. Catalyzes the pyruvoyl-dependent decarboxylation of aspartate to produce beta-alanine. In Hydrogenobaculum sp. (strain Y04AAS1), this protein is Aspartate 1-decarboxylase.